We begin with the raw amino-acid sequence, 218 residues long: Eukaryotic translation initiation factor 4E-1 (218 aa).

A disordered region spans residues 1-39 (MAEETDTRPASAGSRGRPAPEDDDREEGEITDLACAPSP). The segment covering 21-30 (EDDDREEGEI) has biased composition (acidic residues). EIF4G-binding stretches follow at residues 43 to 46 (HPLE) and 53 to 89 (FDNPQSKSKQAAWGSSIRPIHTFSTVEEFWGLYNNIN). Residues 61 to 66 (KQAAWG), Lys-93, and 111 to 112 (WE) each bind mRNA. Cys-116 and Cys-154 are oxidised to a cystine. Residues 137–146 (HTLLAMIGEQ) form an EIF4G-binding region. Residues 161 to 166 (RGKQER) and 206 to 210 (KKMDK) each bind mRNA.

Belongs to the eukaryotic initiation factor 4E family. As to quaternary structure, EIF4F is a multi-subunit complex, the composition of which varies with external and internal environmental conditions. It is composed of at least EIF4A, EIF4E and EIF4G. EIF4E is also known to interact with other partners. In higher plants two isoforms of EIF4F have been identified, named isoform EIF4F and isoform EIF(iso)4F. Isoform EIF4F has subunits p220 and p26, whereas isoform EIF(iso)4F has subunits p82 and p28. In terms of processing, according to the redox status, the Cys-116-Cys-154 disulfide bridge may have a role in regulating protein function by affecting its ability to bind capped mRNA. Phosphorylated upon oxygen deprivation.

It localises to the nucleus. The protein localises to the cytoplasm. Its function is as follows. Component of the protein complex eIF4F, which is involved in the recognition of the mRNA cap, ATP-dependent unwinding of 5'-terminal secondary structure and recruitment of mRNA to the ribosome. Recognizes and binds the 7-methylguanosine-containing mRNA cap during an early step in the initiation of protein synthesis and facilitates ribosome binding by inducing the unwinding of the mRNAs secondary structures. This is Eukaryotic translation initiation factor 4E-1 from Zea mays (Maize).